The following is a 1132-amino-acid chain: Phytochrome B (1132 aa).

A compositionally biased stretch (basic residues) spans 1 to 11 (MASGSRTKHSH). Residues 1-27 (MASGSRTKHSHQSGQGQVQAQSSGTSN) form a disordered region. Low complexity predominate over residues 12–26 (QSGQGQVQAQSSGTS). Positions 231-409 (DVKLLCDTVV…AFGLQLNMEL (179 aa)) constitute a GAF domain. Residue C336 participates in phytochromobilin binding. PAS domains are found at residues 623–694 (VARE…LRGE) and 757–828 (DYKA…MIVL). The Histidine kinase domain occupies 905–1125 (YLCQEIKSPL…LIILDLPMTR (221 aa)).

Belongs to the phytochrome family. In terms of assembly, homodimer. Post-translationally, contains one covalently linked phytochromobilin chromophore.

Its function is as follows. Regulatory photoreceptor which exists in two forms that are reversibly interconvertible by light: the Pr form that absorbs maximally in the red region of the spectrum and the Pfr form that absorbs maximally in the far-red region. Photoconversion of Pr to Pfr induces an array of morphogenic responses, whereas reconversion of Pfr to Pr cancels the induction of those responses. Pfr controls the expression of a number of nuclear genes including those encoding the small subunit of ribulose-bisphosphate carboxylase, chlorophyll A/B binding protein, protochlorophyllide reductase, rRNA, etc. It also controls the expression of its own gene(s) in a negative feedback fashion. The polypeptide is Phytochrome B (PHYB) (Nicotiana tabacum (Common tobacco)).